The chain runs to 115 residues: Large ribosomal subunit protein uL18 (115 aa).

Belongs to the universal ribosomal protein uL18 family. Part of the 50S ribosomal subunit; part of the 5S rRNA/L5/L18/L25 subcomplex. Contacts the 5S and 23S rRNAs.

Functionally, this is one of the proteins that bind and probably mediate the attachment of the 5S RNA into the large ribosomal subunit, where it forms part of the central protuberance. The polypeptide is Large ribosomal subunit protein uL18 (Rickettsia rickettsii (strain Iowa)).